We begin with the raw amino-acid sequence, 30 residues long: Bacteriocin curvaticin (30 aa).

Cysteines 9 and 14 form a disulfide.

It localises to the secreted. Functionally, has antibacterial activity against the Gram-positive bacterium L.monocytogenes. The polypeptide is Bacteriocin curvaticin (Latilactobacillus curvatus (Lactobacillus curvatus)).